We begin with the raw amino-acid sequence, 147 residues long: Cyanate hydratase (147 aa).

Residues R88, E91, and S114 contribute to the active site.

This sequence belongs to the cyanase family.

It catalyses the reaction cyanate + hydrogencarbonate + 3 H(+) = NH4(+) + 2 CO2. In terms of biological role, catalyzes the reaction of cyanate with bicarbonate to produce ammonia and carbon dioxide. This is Cyanate hydratase from Albidiferax ferrireducens (strain ATCC BAA-621 / DSM 15236 / T118) (Rhodoferax ferrireducens).